A 428-amino-acid chain; its full sequence is Homoserine dehydrogenase (428 aa).

NADPH-binding residues include Phe-10, Thr-12, Val-13, Arg-44, and Lys-106. An NAD(+)-binding site is contributed by Val-13. Residues Val-13, Arg-44, and Lys-106 each contribute to the NADP(+) site. Positions 130, 133, 135, and 137 each coordinate Na(+). Gly-188 and Glu-191 together coordinate NADP(+). L-homoserine is bound by residues Glu-191 and Asp-202. The Proton donor role is filled by Lys-206. Gly-303 lines the NADPH pocket. Gly-303 contributes to the NAD(+) binding site. Gly-303 is an NADP(+) binding site. Positions 351–425 constitute an ACT domain; the sequence is YFSVETPDST…DFKLLNYFKV (75 aa).

It belongs to the homoserine dehydrogenase family. Requires a metal cation as cofactor.

The enzyme catalyses L-homoserine + NADP(+) = L-aspartate 4-semialdehyde + NADPH + H(+). It catalyses the reaction L-homoserine + NAD(+) = L-aspartate 4-semialdehyde + NADH + H(+). Its pathway is amino-acid biosynthesis; L-methionine biosynthesis via de novo pathway; L-homoserine from L-aspartate: step 3/3. It participates in amino-acid biosynthesis; L-threonine biosynthesis; L-threonine from L-aspartate: step 3/5. Catalyzes the conversion of L-aspartate-beta-semialdehyde (L-Asa) to L-homoserine (L-Hse), the third step in the biosynthesis of threonine and methionine from aspartate. In Lactococcus lactis subsp. lactis (strain IL1403) (Streptococcus lactis), this protein is Homoserine dehydrogenase (hom).